Reading from the N-terminus, the 452-residue chain is 23S rRNA (uracil(1939)-C(5))-methyltransferase RlmD (452 aa).

The interval 1–23 (MSRKKSNGGLRFQPAGGNRATQI) is disordered. In terms of domain architecture, TRAM spans 22–80 (QIPVGKKQRLLIERVAGDGRGIAFIEGRTWFVSGALGGEEVEARVLGARGKVVEARLER). Residues Cys-93, Cys-99, Cys-102, and Cys-181 each contribute to the [4Fe-4S] cluster site. Positions 285, 314, 319, 335, 362, and 383 each coordinate S-adenosyl-L-methionine. Cys-409 functions as the Nucleophile in the catalytic mechanism.

This sequence belongs to the class I-like SAM-binding methyltransferase superfamily. RNA M5U methyltransferase family. RlmD subfamily.

It carries out the reaction uridine(1939) in 23S rRNA + S-adenosyl-L-methionine = 5-methyluridine(1939) in 23S rRNA + S-adenosyl-L-homocysteine + H(+). Functionally, catalyzes the formation of 5-methyl-uridine at position 1939 (m5U1939) in 23S rRNA. This chain is 23S rRNA (uracil(1939)-C(5))-methyltransferase RlmD, found in Pseudomonas entomophila (strain L48).